A 482-amino-acid polypeptide reads, in one-letter code: C3a anaphylatoxin chemotactic receptor (482 aa).

Residues 1 to 23 (MASFSAETNSTDLLSQPWNEPPV) lie on the Extracellular side of the membrane. Asparagine 9 carries N-linked (GlcNAc...) asparagine glycosylation. Residues 24-46 (ILSMVILSLTFLLGLPGNGLVLW) traverse the membrane as a helical segment. The Cytoplasmic segment spans residues 47–57 (VAGLKMQRTVN). Residues 58–80 (TIWFLHLTLADLLCCLSLPFSLA) form a helical membrane-spanning segment. Residues 81 to 96 (HLALQGQWPYGRFLCK) lie on the Extracellular side of the membrane. Cysteine 95 and cysteine 172 are oxidised to a cystine. A helical transmembrane segment spans residues 97–118 (LIPSIIVLNMFASVFLLTAISL). At 119–139 (DRCLVVFKPIWCQNHRNVGMA) the chain is on the cytoplasmic side. The chain crosses the membrane as a helical span at residues 140–160 (CSICGCIWVVAFVMCIPVFVY). Residues 161-340 (REIFTTDNHN…TPLVAITITR (180 aa)) are Extracellular-facing. A sulfotyrosine mark is found at tyrosine 174 and tyrosine 184. An N-linked (GlcNAc...) asparagine glycan is attached at asparagine 194. The O-linked (GalNAc...) serine glycan is linked to serine 266. Tyrosine 318 bears the Sulfotyrosine mark. The chain crosses the membrane as a helical span at residues 341–360 (LVVGFLLPSVIMIACYSFIV). The Cytoplasmic segment spans residues 361–377 (FRMQRGRFAKSQSKTFR). A helical transmembrane segment spans residues 378–400 (VAVVVVAVFLVCWTPYHIFGVLS). The Extracellular segment spans residues 401 to 417 (LLTDPETPLGKTLMSWD). Residues 418–438 (HVCIALASANSCFNPFLYALL) form a helical membrane-spanning segment. At 439 to 482 (GKDFRKKARQSIQGILEAAFSEELTRSTHCPSNNVISERNSTTV) the chain is on the cytoplasmic side. Serine 459 carries the phosphoserine modification. Threonine 463 carries the post-translational modification Phosphothreonine.

It belongs to the G-protein coupled receptor 1 family. As to quaternary structure, interacts with VGF-derived peptide TLQP-21. Post-translationally, among the sulfation sites Tyr-174 is essential for binding of C3a anaphylatoxin. In terms of processing, O-glycosylated. In terms of tissue distribution, widely expressed in several differentiated hematopoietic cell lines, in the lung, spleen, ovary, placenta, small intestine, throughout the brain, heart, and endothelial cells. Mostly expressed in lymphoid tissues.

The protein resides in the cell membrane. Its function is as follows. Receptor for the chemotactic and inflammatory peptide anaphylatoxin C3a. This receptor stimulates chemotaxis, granule enzyme release and superoxide anion production. The protein is C3a anaphylatoxin chemotactic receptor (C3AR1) of Homo sapiens (Human).